A 389-amino-acid chain; its full sequence is Succinate--CoA ligase [ADP-forming] subunit beta (389 aa).

An ATP-grasp domain is found at 9-236; the sequence is RDMFEAHGVP…KDSADPLEAK (228 aa). Residues K45, 52–54, A94, and E99 contribute to the ATP site; that span reads GRG. N191 and D205 together coordinate Mg(2+). Residues N256 and 318–320 each bind substrate; that span reads GIT.

Belongs to the succinate/malate CoA ligase beta subunit family. Heterotetramer of two alpha and two beta subunits. It depends on Mg(2+) as a cofactor.

It catalyses the reaction succinate + ATP + CoA = succinyl-CoA + ADP + phosphate. The enzyme catalyses GTP + succinate + CoA = succinyl-CoA + GDP + phosphate. It participates in carbohydrate metabolism; tricarboxylic acid cycle; succinate from succinyl-CoA (ligase route): step 1/1. Its function is as follows. Succinyl-CoA synthetase functions in the citric acid cycle (TCA), coupling the hydrolysis of succinyl-CoA to the synthesis of either ATP or GTP and thus represents the only step of substrate-level phosphorylation in the TCA. The beta subunit provides nucleotide specificity of the enzyme and binds the substrate succinate, while the binding sites for coenzyme A and phosphate are found in the alpha subunit. This Renibacterium salmoninarum (strain ATCC 33209 / DSM 20767 / JCM 11484 / NBRC 15589 / NCIMB 2235) protein is Succinate--CoA ligase [ADP-forming] subunit beta.